The sequence spans 173 residues: MDVTIQHPWFKRALGPFYPSRLFDQFFGEGLFEYDLLPFLSSTISPYYRQSLFRTVLDSGISEVRSDRDQFLILLDVKHFSPEDLTVKVLDDFVEIHGKHNERQDDHGYISREFHRRYRLPSNVDQSALSCSLSADGMLTFCGPKVQSGMDASHSERAIPVSREEKPSSAPSS.

Met1 carries the N-acetylmethionine modification. The segment at 1–63 (MDVTIQHPWF…RTVLDSGISE (63 aa)) is required for complex formation with BFSP1 and BFSP2. At Gln6 the chain carries Deamidated glutamine; partial. Phosphoserine is present on Ser45. Gln50 is subject to Deamidated glutamine; partial. Positions 52–162 (LFRTVLDSGI…SHSERAIPVS (111 aa)) constitute a sHSP domain. N6-acetyllysine is present on Lys99. Residue His100 coordinates Zn(2+). At Asn101 the chain carries Deamidated asparagine; partial. Zn(2+) is bound by residues Glu102 and His107. The residue at position 122 (Ser122) is a Phosphoserine. Asn123 bears the Deamidated asparagine; partial mark. Cys131 and Cys142 form a disulfide bridge. Residue Gln147 is modified to Deamidated glutamine; partial. The disordered stretch occupies residues 147 to 173 (QSGMDASHSERAIPVSREEKPSSAPSS). Residues 153 to 167 (SHSERAIPVSREEKP) are compositionally biased toward basic and acidic residues. His154 provides a ligand contact to Zn(2+). Ser162 carries O-linked (GlcNAc) serine glycosylation.

This sequence belongs to the small heat shock protein (HSP20) family. Heteromer composed of three CRYAA and one CRYAB subunits. Inter-subunit bridging via zinc ions enhances stability, which is crucial as there is no protein turn over in the lens. Can also form homodimers and homotetramers (dimers of dimers) which serve as the building blocks of homooligomers. Within homooligomers, the zinc-binding motif is created from residues of 3 different molecules. His-100 and Glu-102 from one molecule are ligands of the zinc ion, and His-107 and His-154 residues from additional molecules complete the site with tetrahedral coordination geometry. Part of a complex required for lens intermediate filament formation composed of BFSP1, BFSP2 and CRYAA. Undergoes age-dependent proteolytical cleavage at the C-terminus.

It is found in the cytoplasm. The protein resides in the nucleus. Its function is as follows. Contributes to the transparency and refractive index of the lens. In its oxidized form (absence of intramolecular disulfide bond), acts as a chaperone, preventing aggregation of various proteins under a wide range of stress conditions. Required for the correct formation of lens intermediate filaments as part of a complex composed of BFSP1, BFSP2 and CRYAA. This Procavia capensis (Rock hyrax) protein is Alpha-crystallin A chain (CRYAA).